We begin with the raw amino-acid sequence, 554 residues long: (Z)-gamma-bisabolene synthase 2 (554 aa).

Residues D306, D310, D450, and D458 each contribute to the Mg(2+) site. The DDXXD motif signature appears at 306–310 (DDACD).

This sequence belongs to the terpene synthase family. Tpsa subfamily. Requires Mg(2+) as cofactor. Mn(2+) is required as a cofactor. As to expression, predominantly expressed in roots. Expressed in the cortex and the sub-epidermal layers of roots. Also detected in leaf hydathodes and flower stigmata.

The protein resides in the cytoplasm. It carries out the reaction (2E,6E)-farnesyl diphosphate = (Z)-gamma-bisabolene + diphosphate. The protein operates within secondary metabolite biosynthesis; terpenoid biosynthesis. Involved in sesquiterpene (C15) biosynthesis. The major product is (Z)-gamma-bisabolene with minor amounts of (E)-nerolidol and alpha-bisabolol. In Arabidopsis thaliana (Mouse-ear cress), this protein is (Z)-gamma-bisabolene synthase 2 (TPS13).